A 186-amino-acid polypeptide reads, in one-letter code: RNA-free ribonuclease P (186 aa).

This sequence belongs to the HARP family.

It carries out the reaction Endonucleolytic cleavage of RNA, removing 5'-extranucleotides from tRNA precursor.. RNA-free RNase P that catalyzes the removal of the 5'-leader sequence from pre-tRNA to produce the mature 5'-terminus. The chain is RNA-free ribonuclease P from Hydrogenobaculum sp. (strain Y04AAS1).